Reading from the N-terminus, the 130-residue chain is Small ribosomal subunit protein uS11c (130 aa).

Belongs to the universal ribosomal protein uS11 family. Part of the 30S ribosomal subunit.

The protein resides in the plastid. Its subcellular location is the chloroplast. In Mesostigma viride (Green alga), this protein is Small ribosomal subunit protein uS11c.